A 250-amino-acid polypeptide reads, in one-letter code: Ubiquinone/menaquinone biosynthesis C-methyltransferase UbiE (250 aa).

Residues Thr73, Asp94, 122–123, and Ser139 each bind S-adenosyl-L-methionine; that span reads NA.

Belongs to the class I-like SAM-binding methyltransferase superfamily. MenG/UbiE family.

The enzyme catalyses a 2-demethylmenaquinol + S-adenosyl-L-methionine = a menaquinol + S-adenosyl-L-homocysteine + H(+). The catalysed reaction is a 2-methoxy-6-(all-trans-polyprenyl)benzene-1,4-diol + S-adenosyl-L-methionine = a 5-methoxy-2-methyl-3-(all-trans-polyprenyl)benzene-1,4-diol + S-adenosyl-L-homocysteine + H(+). The protein operates within quinol/quinone metabolism; menaquinone biosynthesis; menaquinol from 1,4-dihydroxy-2-naphthoate: step 2/2. Its pathway is cofactor biosynthesis; ubiquinone biosynthesis. Functionally, methyltransferase required for the conversion of demethylmenaquinol (DMKH2) to menaquinol (MKH2) and the conversion of 2-polyprenyl-6-methoxy-1,4-benzoquinol (DDMQH2) to 2-polyprenyl-3-methyl-6-methoxy-1,4-benzoquinol (DMQH2). The chain is Ubiquinone/menaquinone biosynthesis C-methyltransferase UbiE from Francisella tularensis subsp. mediasiatica (strain FSC147).